A 261-amino-acid polypeptide reads, in one-letter code: MIVVKTGGRVLKQNLDRVVQSIIKTNNKIIYVHGGGDQVTELSSKLGIEPKFVTSPEGIRSRYTTKEELEVFIMVMSSISRNILSRVSSYRNSIALTGADGKLVLAERKKKIIVIDERGRKRIIDGGYTGKIKNINKELLVTFSNLFEVIILSPLAYDPDESTLLNVDGDQMAFALATALRSDNLILLTDVEGVMVDNKVVNKLTVEEAKELSKKIGPGMNRKILMAAEAIENGVKKVIISSGLVEDPIKNALEGKGTVIE.

Residues 35–36 (GG), Arg62, and Asn166 each bind substrate.

This sequence belongs to the acetylglutamate kinase family. LysZ subfamily.

Its subcellular location is the cytoplasm. The enzyme catalyses [amino-group carrier protein]-C-terminal-N-(1,4-dicarboxybutan-1-yl)-L-glutamine + ATP = [amino-group carrier protein]-C-terminal-N-(1-carboxy-5-phosphooxy-5-oxopentan-1-yl)-L-glutamine + ADP. It catalyses the reaction [amino-group carrier protein]-C-terminal-gamma-(L-glutamyl)-L-glutamate + ATP = [amino-group carrier protein]-C-terminal-gamma-(5-phospho-L-glutamyl)-L-glutamate + ADP. It participates in amino-acid biosynthesis; L-lysine biosynthesis via AAA pathway; L-lysine from L-alpha-aminoadipate (Thermus route): step 2/5. Its pathway is amino-acid biosynthesis; L-arginine biosynthesis. Involved in both the arginine and lysine biosynthetic pathways. Phosphorylates the LysW-bound precursors glutamate (for arginine biosynthesis), respectively alpha-aminoadipate (for lysine biosynthesis). This chain is [LysW]-aminoadipate/[LysW]-glutamate kinase, found in Sulfolobus acidocaldarius (strain ATCC 33909 / DSM 639 / JCM 8929 / NBRC 15157 / NCIMB 11770).